The chain runs to 132 residues: Ribosome-binding factor A (132 aa).

The protein belongs to the RbfA family. Monomer. Binds 30S ribosomal subunits, but not 50S ribosomal subunits or 70S ribosomes.

The protein resides in the cytoplasm. One of several proteins that assist in the late maturation steps of the functional core of the 30S ribosomal subunit. Associates with free 30S ribosomal subunits (but not with 30S subunits that are part of 70S ribosomes or polysomes). Required for efficient processing of 16S rRNA. May interact with the 5'-terminal helix region of 16S rRNA. This Burkholderia multivorans (strain ATCC 17616 / 249) protein is Ribosome-binding factor A.